The sequence spans 407 residues: Phosphopentomutase (407 aa).

Mn(2+)-binding residues include Asp10, Asp306, His311, Asp347, His348, and His359.

It belongs to the phosphopentomutase family. Mn(2+) is required as a cofactor.

It is found in the cytoplasm. It carries out the reaction 2-deoxy-alpha-D-ribose 1-phosphate = 2-deoxy-D-ribose 5-phosphate. The enzyme catalyses alpha-D-ribose 1-phosphate = D-ribose 5-phosphate. The protein operates within carbohydrate degradation; 2-deoxy-D-ribose 1-phosphate degradation; D-glyceraldehyde 3-phosphate and acetaldehyde from 2-deoxy-alpha-D-ribose 1-phosphate: step 1/2. Isomerase that catalyzes the conversion of deoxy-ribose 1-phosphate (dRib-1-P) and ribose 1-phosphate (Rib-1-P) to deoxy-ribose 5-phosphate (dRib-5-P) and ribose 5-phosphate (Rib-5-P), respectively. This chain is Phosphopentomutase, found in Salmonella gallinarum (strain 287/91 / NCTC 13346).